A 337-amino-acid polypeptide reads, in one-letter code: Ribonucleoside-diphosphate reductase small chain (337 aa).

Fe cation-binding residues include Asp-85, Glu-116, and His-119. Tyr-123 is a catalytic residue. Glu-178, Glu-212, and His-215 together coordinate Fe cation.

Belongs to the ribonucleoside diphosphate reductase small chain family. Heterodimer of a large and a small subunit. Fe cation is required as a cofactor.

It catalyses the reaction a 2'-deoxyribonucleoside 5'-diphosphate + [thioredoxin]-disulfide + H2O = a ribonucleoside 5'-diphosphate + [thioredoxin]-dithiol. Functionally, provides the precursors necessary for DNA synthesis. Catalyzes the biosynthesis of deoxyribonucleotides from the corresponding ribonucleotides. This is Ribonucleoside-diphosphate reductase small chain (RNR2) from Trypanosoma brucei brucei.